We begin with the raw amino-acid sequence, 124 residues long: Small ribosomal subunit protein uS12 (124 aa).

Asp-89 carries the 3-methylthioaspartic acid modification. The residue at position 108 (Lys-108) is an N6-acetyllysine.

Belongs to the universal ribosomal protein uS12 family. Part of the 30S ribosomal subunit. Contacts proteins S8 and S17. May interact with IF1 in the 30S initiation complex.

With S4 and S5 plays an important role in translational accuracy. In terms of biological role, interacts with and stabilizes bases of the 16S rRNA that are involved in tRNA selection in the A site and with the mRNA backbone. Located at the interface of the 30S and 50S subunits, it traverses the body of the 30S subunit contacting proteins on the other side and probably holding the rRNA structure together. The combined cluster of proteins S8, S12 and S17 appears to hold together the shoulder and platform of the 30S subunit. In Escherichia coli O6:K15:H31 (strain 536 / UPEC), this protein is Small ribosomal subunit protein uS12.